Reading from the N-terminus, the 185-residue chain is Pro-adrenomedullin (185 aa).

The signal sequence occupies residues 1-21 (MKLVSVALMYLGSLAFLGADT). Residue arginine 41 is modified to Arginine amide. A propeptide spanning residues 45-92 (ELRMSSSYPTGLADVKAGPAQTLIRPQDMKGASRSPEDSSPDAARIRV) is cleaved from the precursor. The disordered stretch occupies residues 60–87 (KAGPAQTLIRPQDMKGASRSPEDSSPDA). A disulfide bond links cysteine 110 and cysteine 115. The disordered stretch occupies residues 133-185 (DNVAPRSKISPQGYGRRRRRSLPEAGPGRTLVSSKPQAHGAPAPPSGSAPHFL). Position 146 is a tyrosine amide (tyrosine 146). Positions 148–185 (RRRRRSLPEAGPGRTLVSSKPQAHGAPAPPSGSAPHFL) are cleaved as a propeptide — preproAM C-terminal fragment.

The protein belongs to the adrenomedullin family. As to expression, highest levels found in pheochromocytoma and adrenal medulla. Also found in lung, ventricle and kidney tissues.

The protein localises to the secreted. Adrenomedullin/ADM and proadrenomedullin N-20 terminal peptide/PAMP are peptide hormones that act as potent hypotensive and vasodilatator agents. Numerous actions have been reported most related to the physiologic control of fluid and electrolyte homeostasis. In the kidney, ADM is diuretic and natriuretic, and both ADM and PAMP inhibit aldosterone secretion by direct adrenal actions. In pituitary gland, both peptides at physiologically relevant doses inhibit basal ACTH secretion. Both peptides appear to act in brain and pituitary gland to facilitate the loss of plasma volume, actions which complement their hypotensive effects in blood vessels. Its function is as follows. ADM function is mediated by the CALCRL-RAMP2 and CALCRL-RAMP3 receptor complexes with ADM showing the highest potency for the CALCRL-RAMP2 complex. The sequence is that of Pro-adrenomedullin from Homo sapiens (Human).